Consider the following 193-residue polypeptide: Probable GTP-binding protein EngB (193 aa).

Positions 24–193 (NIPEIALAGR…ELKAALAELL (170 aa)) constitute an EngB-type G domain. GTP-binding positions include 32-39 (GRSNVGKS), 59-63 (GKTRT), 77-80 (DLPG), 144-147 (TKAD), and 174-176 (FSA). The Mg(2+) site is built by Ser39 and Thr61.

It belongs to the TRAFAC class TrmE-Era-EngA-EngB-Septin-like GTPase superfamily. EngB GTPase family. The cofactor is Mg(2+).

Its function is as follows. Necessary for normal cell division and for the maintenance of normal septation. The sequence is that of Probable GTP-binding protein EngB from Syntrophomonas wolfei subsp. wolfei (strain DSM 2245B / Goettingen).